The following is a 276-amino-acid chain: Large ribosomal subunit protein uL2 (276 aa).

Disordered stretches follow at residues 1–20 and 219–276; these read MGIKKYNPTTNGRRNMTTND and TVRG…RRKK. A compositionally biased stretch (polar residues) spans 7–20; it reads NPTTNGRRNMTTND.

The protein belongs to the universal ribosomal protein uL2 family. As to quaternary structure, part of the 50S ribosomal subunit. Forms a bridge to the 30S subunit in the 70S ribosome.

One of the primary rRNA binding proteins. Required for association of the 30S and 50S subunits to form the 70S ribosome, for tRNA binding and peptide bond formation. It has been suggested to have peptidyltransferase activity; this is somewhat controversial. Makes several contacts with the 16S rRNA in the 70S ribosome. In Bacillus cereus (strain G9842), this protein is Large ribosomal subunit protein uL2.